An 887-amino-acid polypeptide reads, in one-letter code: Alanine--tRNA ligase (887 aa).

Positions 564, 568, 676, and 680 each coordinate Zn(2+).

The protein belongs to the class-II aminoacyl-tRNA synthetase family. Requires Zn(2+) as cofactor.

It localises to the cytoplasm. It catalyses the reaction tRNA(Ala) + L-alanine + ATP = L-alanyl-tRNA(Ala) + AMP + diphosphate. Catalyzes the attachment of alanine to tRNA(Ala) in a two-step reaction: alanine is first activated by ATP to form Ala-AMP and then transferred to the acceptor end of tRNA(Ala). Also edits incorrectly charged Ser-tRNA(Ala) and Gly-tRNA(Ala) via its editing domain. The polypeptide is Alanine--tRNA ligase (Rhizobium meliloti (strain 1021) (Ensifer meliloti)).